Consider the following 250-residue polypeptide: Corrinoid adenosyltransferase MMAB (250 aa).

The N-terminal 32 residues, 1–32 (MAVCGLGSRLGLGSRLGLRGCFGAARLLYPRF), are a transit peptide targeting the mitochondrion. The tract at residues 34–59 (SRGPQGVEDGDRPQPSSKTPRIPKIY) is disordered. ATP contacts are provided by residues 60–63 (TKTG), 68–69 (SS), and Lys78. Phosphoserine is present on Ser134. 190-194 (RRAER) contacts ATP. Residue Lys211 is modified to N6-succinyllysine. Residue Asn214 coordinates ATP. At Lys230 the chain carries N6-acetyllysine; alternate. Lys230 carries the post-translational modification N6-succinyllysine; alternate.

Belongs to the Cob(I)alamin adenosyltransferase family. In terms of assembly, homotrimer. As to expression, expressed in liver and skeletal muscle.

It is found in the mitochondrion. The enzyme catalyses cob(I)alamin-[corrinoid adenosyltransferase] + ATP = apo-[corrinoid adenosyltransferase] + adenosylcob(III)alamin + triphosphate. Its function is as follows. Converts cob(I)alamin to adenosylcobalamin (adenosylcob(III)alamin), a coenzyme for methylmalonyl-CoA mutase, therefore participates in the final step of the vitamin B12 conversion. Generates adenosylcobalamin (AdoCbl) and directly delivers the cofactor to MUT in a transfer that is stimulated by ATP-binding to MMAB and gated by MMAA. The chain is Corrinoid adenosyltransferase MMAB from Homo sapiens (Human).